A 379-amino-acid chain; its full sequence is Armadillo repeat-containing X-linked protein 3 (379 aa).

Residues 1 to 6 are Mitochondrial intermembrane-facing; sequence MGYARK. Mitochondrion outer membrane (MOM)-targeting sequence regions lie at residues 1 to 6 and 26 to 37; these read MGYARK and RLTRGRKQNKEK. A helical; Signal-anchor transmembrane segment spans residues 7 to 29; sequence VGWVTAGLVIGAGACYCIYRLTR. Residues 30–379 lie on the Cytoplasmic side of the membrane; sequence GRKQNKEKMA…AEHMFPKSQE (350 aa). Phosphoserine is present on residues S61, S67, and S72. The nuclear localization signal stretch occupies residues 89 to 98; the sequence is RARARARARA. S110 carries the post-translational modification Phosphoserine. ARM repeat units lie at residues 111–151, 153–192, and 233–272; these read PNSD…NNAA, AFNRDIIRDLGGLPIVAKILNTRDPIVKEKALIVLNNLSV, and VTNEYQHMLANSISDFFRLFSAGNEETKLQVLKLLLNLAE.

The protein belongs to the eutherian X-chromosome-specific Armcx family. Interacts (via ARM domain) with MIRO1, MIRO2 and TRAK2. The interaction with Miro is calcium-dependent. Interacts with SOX10.

The protein localises to the mitochondrion outer membrane. Its subcellular location is the cytoplasm. The protein resides in the nucleus. Its function is as follows. Regulates mitochondrial aggregation and transport in axons in living neurons. May link mitochondria to the TRAK2-kinesin motor complex via its interaction with Miro and TRAK2. Mitochondrial distribution and dynamics is regulated through ARMCX3 protein degradation, which is promoted by PCK and negatively regulated by WNT1. Enhances the SOX10-mediated transactivation of the neuronal acetylcholine receptor subunit alpha-3 and beta-4 subunit gene promoters. The sequence is that of Armadillo repeat-containing X-linked protein 3 (ARMCX3) from Pongo abelii (Sumatran orangutan).